A 135-amino-acid polypeptide reads, in one-letter code: Succinate dehydrogenase assembly factor 3, mitochondrial (135 aa).

The N-terminal 12 residues, 1–12 (MRIFTRLLYAAP), are a transit peptide targeting the mitochondrion.

Belongs to the complex I LYR family. SDHAF3 subfamily. Interacts with the iron-sulfur protein subunit within the SDH catalytic dimer.

It is found in the mitochondrion matrix. Its function is as follows. Plays an essential role in the assembly of succinate dehydrogenase (SDH), an enzyme complex (also referred to as respiratory complex II) that is a component of both the tricarboxylic acid (TCA) cycle and the mitochondrial electron transport chain, and which couples the oxidation of succinate to fumarate with the reduction of ubiquinone (coenzyme Q) to ubiquinol. Promotes maturation of the iron-sulfur protein subunit of the SDH catalytic dimer, protecting it from the deleterious effects of oxidants. May act together with SDHAF1. This Emericella nidulans (strain FGSC A4 / ATCC 38163 / CBS 112.46 / NRRL 194 / M139) (Aspergillus nidulans) protein is Succinate dehydrogenase assembly factor 3, mitochondrial.